A 484-amino-acid polypeptide reads, in one-letter code: NADH-ubiquinone oxidoreductase chain 4 (484 aa).

14 helical membrane passes run 1–21 (MLTL…PMQG), 33–53 (LALG…GEFD), 77–97 (VDGI…ICIL), 109–129 (YFLM…VVLD), 130–150 (ILLF…IVGI), 162–182 (FLLF…FLVI), 206–226 (LLWL…PFHV), 236–256 (PLAG…YGYM), 270–290 (FSPL…LATL), 295–315 (FKAL…LGLF), 326–346 (LLLS…VGGV), 365–385 (YMPL…AVPL), 405–425 (VFAV…IWLY), and 448–468 (FMLL…PNII).

It belongs to the complex I subunit 4 family.

The protein localises to the mitochondrion inner membrane. It catalyses the reaction a ubiquinone + NADH + 5 H(+)(in) = a ubiquinol + NAD(+) + 4 H(+)(out). In terms of biological role, core subunit of the mitochondrial membrane respiratory chain NADH dehydrogenase (Complex I) that is believed to belong to the minimal assembly required for catalysis. Complex I functions in the transfer of electrons from NADH to the respiratory chain. The immediate electron acceptor for the enzyme is believed to be ubiquinone. This chain is NADH-ubiquinone oxidoreductase chain 4 (ND4), found in Mycosarcoma maydis (Corn smut fungus).